The primary structure comprises 210 residues: MEAQSSSRQVTGPLYLGVKEDWEEQHDVKAEAFLQAGEGRKEKGAQGQPGVGAVGKEGEGEELSGGEGQFGPGAPGPMGDEDKDGGTRAGGVEEEQNEPAAEGTESQKNGKPEDRQMPLQGSRFAQQRLSELQSILQRTNSFDVPREDLYRLMDTCVARVQNWFKIRRAAARRNRRRTTPVPEHFRGTFECPACRGVRWGERCPFATPRF.

The interval 29–117 (KAEAFLQAGE…KNGKPEDRQM (89 aa)) is disordered. Positions 117-175 (MPLQGSRFAQQRLSELQSILQRTNSFDVPREDLYRLMDTCVARVQNWFKIRRAAARRNR) form a DNA-binding region, homeobox; atypical.

Its subcellular location is the nucleus. Functionally, transcription factor required for differentiation of embryonic stem cells (ESCs) into primordial germ cells. The polypeptide is Homeobox protein Rhox5 (Rhox5) (Mus minutoides (Southern African pygmy mouse)).